The sequence spans 568 residues: Phosphoprotein (568 aa).

Positions 1 to 24 are disordered; the sequence is MDQDAFFFERDPEAEGEAPRKQES. Over residues 7 to 24 the composition is skewed to basic and acidic residues; it reads FFERDPEAEGEAPRKQES. The segment at 33–41 is N0 binding; it reads DVVLSYKPT. The segment at 45-324 is disordered; that stretch reads EDRSWLHNII…SNEEGTSNTS (280 aa). 3 stretches are compositionally biased toward basic and acidic residues: residues 56–105, 129–144, and 151–167; these read NPKE…HARI, GDER…PNER, and PTDE…KREE. Over residues 179–216 the composition is skewed to polar residues; the sequence is GSTSLSDDGEGRTNNNGRSMETSSTHSTRITDVITNPS. Over residues 239–253 the composition is skewed to basic and acidic residues; it reads TRSERTQNSELHKST. Positions 295–304 are enriched in low complexity; that stretch reads TTNNANNNAK. Positions 344-411 are multimerization; the sequence is FELSRRASHQ…SSRDLHKRFS (68 aa). Positions 387-416 form a coiled coil; sequence EENRTLLKQIQEEIDSSRDLHKRFSEYQKE. A l protein binding region spans residues 412–445; sequence EYQKEQNSLMMANLSTLHIITDRGGKTGDPSDTT. 2 disordered regions span residues 434 to 455 and 493 to 513; these read RGGK…TKGK and PVLE…LIPS. Positions 441 to 450 are enriched in polar residues; it reads PSDTTRSPSV. The interaction with the nucleocapsid (N-RNA) stretch occupies residues 479–568; that stretch reads DLIREDELRE…FEEDIDSLTN (90 aa).

Belongs to the respirovirus P protein family. Homotetramer. Interacts (via multimerization domain) with polymerase L; this interaction forms the polymerase complex. Interacts (via N-terminus) with N0; this interaction allows P to chaperon N0 before encapsidation and form the N-P complex. Interacts (via C-terminus) with N-RNA template; this interaction positions the polymerase on the template.

Essential cofactor of the RNA polymerase L that plays a central role in the transcription and replication by forming the polymerase complex with RNA polymerase L and recruiting L to the genomic N-RNA template for RNA synthesis. Also plays a central role in the encapsidation of nascent RNA chains by forming the encapsidation complex with the nucleocapsid protein N (N-P complex). Acts as a chaperone for newly synthesized free N protein, so-called N0, allowing encapsidation of nascent RNA chains during replication. The nucleoprotein protein N prevents excessive phosphorylation of P, which leads to down-regulation of viral transcription/ replication. Participates, together with N, in the formation of viral factories (viroplasms), which are large inclusions in the host cytoplasm where replication takes place. Recruits host PI4KB and remodel the host endoplasmic reticulum membrane to form viral replication factories. The polypeptide is Phosphoprotein (P/C) (Homo sapiens (Human)).